We begin with the raw amino-acid sequence, 128 residues long: uncharacterized protein (128 aa).

Basic and acidic residues predominate over residues 1–11 (MDNKKKEENPS). The tract at residues 1–40 (MDNKKKEENPSKSDTSISLPPSSTGEALQNYTESEWNASD) is disordered. Polar residues predominate over residues 12–37 (KSDTSISLPPSSTGEALQNYTESEWN).

This is an uncharacterized protein from Caenorhabditis elegans.